The sequence spans 122 residues: Large ribosomal subunit protein uL14 (122 aa).

Belongs to the universal ribosomal protein uL14 family. Part of the 50S ribosomal subunit. Forms a cluster with proteins L3 and L19. In the 70S ribosome, L14 and L19 interact and together make contacts with the 16S rRNA in bridges B5 and B8.

Binds to 23S rRNA. Forms part of two intersubunit bridges in the 70S ribosome. The sequence is that of Large ribosomal subunit protein uL14 from Bartonella quintana (strain Toulouse) (Rochalimaea quintana).